A 433-amino-acid chain; its full sequence is Alpha-(1,3)-fucosyltransferase fut-1 (433 aa).

Topologically, residues 1 to 12 (MTARSIKLFFAR) are cytoplasmic. The chain crosses the membrane as a helical; Signal-anchor for type II membrane protein span at residues 13-32 (WKYLMFACCITYLLVIYAPI). Topologically, residues 33–433 (SKSEQKDWKE…GTLVDSIPLD (401 aa)) are lumenal. N-linked (GlcNAc...) asparagine glycosylation is found at asparagine 194 and asparagine 359.

Belongs to the glycosyltransferase 10 family. Mg(2+) is required as a cofactor. Requires Mn(2+) as cofactor. Post-translationally, N-glycosylated. Glycosylation is important for enzymatic activity. As to expression, expressed in the pharyngeal-intestinal (PI) and anal valves. Expressed in ASG neurons and in one or two neurons in the retrovesicular ganglion and two neurons posterior to the PI valve and PHA and PHB neurons in the tail.

It is found in the golgi apparatus. The protein localises to the golgi stack membrane. It carries out the reaction N(4)-{beta-D-GlcNAc-(1-&gt;2)-alpha-D-Man-(1-&gt;3)-[beta-D-GlcNAc-(1-&gt;2)-alpha-D-Man-(1-&gt;6)]-beta-D-Man-(1-&gt;4)-beta-D-GlcNAc-(1-&gt;4)-beta-D-GlcNAc}-L-asparaginyl-[protein] + GDP-beta-L-fucose = N(4)-{beta-D-GlcNAc-(1-&gt;2)-alpha-D-Man-(1-&gt;3)-[beta-D-GlcNAc-(1-&gt;2)-alpha-D-Man-(1-&gt;6)]-beta-D-Man-(1-&gt;4)-beta-D-GlcNAc-(1-&gt;4)-[alpha-L-Fuc(1-&gt;3)]-beta-D-GlcNAc}-L-asparaginyl-[protein] + GDP + H(+). It functions in the pathway protein modification; protein glycosylation. Inhibited by Cu(2+) or Zn(2+) and to a lesser extent Ni(2+) ions. Functionally, preferentially catalyzes the addition of fucose in alpha 1-3 linkage to the first GlcNAc residue (with or without alpha 1,6-linked fucose), next to the peptide chains in N-glycans. Unlike in mammals, does not require the prior action of N-acetylglucosaminyltransferase I to generate complex N-glycans. The polypeptide is Alpha-(1,3)-fucosyltransferase fut-1 (Caenorhabditis elegans).